We begin with the raw amino-acid sequence, 369 residues long: Phosphatidylglycerol--prolipoprotein diacylglyceryl transferase (369 aa).

The next 3 membrane-spanning stretches (helical) occupy residues 26-46, 60-80, and 97-117; these read YYGILYATGILVAIIAGILTL, YVFIGIISIIFGARTWSFIIG, and LAIQGGVIFTITTGLIFFFFI. Residue R167 participates in a 1,2-diacyl-sn-glycero-3-phospho-(1'-sn-glycerol) binding. 2 helical membrane passes run 216-236 and 273-293; these read VPIFLIESFFNVIAFIIIVFL and FVTSIVTSVLFLLGGSIGFIF.

The protein belongs to the Lgt family.

The protein resides in the cell membrane. It catalyses the reaction L-cysteinyl-[prolipoprotein] + a 1,2-diacyl-sn-glycero-3-phospho-(1'-sn-glycerol) = an S-1,2-diacyl-sn-glyceryl-L-cysteinyl-[prolipoprotein] + sn-glycerol 1-phosphate + H(+). The protein operates within protein modification; lipoprotein biosynthesis (diacylglyceryl transfer). Functionally, catalyzes the transfer of the diacylglyceryl group from phosphatidylglycerol to the sulfhydryl group of the N-terminal cysteine of a prolipoprotein, the first step in the formation of mature lipoproteins. The sequence is that of Phosphatidylglycerol--prolipoprotein diacylglyceryl transferase from Mycoplasmoides gallisepticum (strain R(low / passage 15 / clone 2)) (Mycoplasma gallisepticum).